The primary structure comprises 689 residues: Protein-glutamine gamma-glutamyltransferase 2 (689 aa).

Active-site residues include Cys-278, His-336, and Asp-359. Ca(2+)-binding residues include Asn-399, Asp-401, Glu-437, Glu-447, and Glu-452. The segment at 427–453 (STKSVGRDSREDITHTYKYPEGSEKER) is disordered. Basic and acidic residues predominate over residues 431–441 (VGRDSREDITH). Residue 476–483 (RIKLSEGA) participates in GTP binding. A Ca(2+)-binding site is contributed by Glu-539. 580–583 (RDVY) contacts GTP.

This sequence belongs to the transglutaminase superfamily. Transglutaminase family. In terms of assembly, monomer. Ca(2+) serves as cofactor. Predominates in mature erythrocytes. Also found in kidney and cardiac muscle.

It localises to the cytoplasm. The protein resides in the cytosol. The protein localises to the nucleus. Its subcellular location is the chromosome. It is found in the secreted. It localises to the extracellular space. The protein resides in the extracellular matrix. The protein localises to the cell membrane. Its subcellular location is the mitochondrion. It carries out the reaction L-glutaminyl-[protein] + L-lysyl-[protein] = [protein]-L-lysyl-N(6)-5-L-glutamyl-[protein] + NH4(+). The enzyme catalyses L-glutaminyl-[protein] + serotonin = 5-serotonyl-L-glutamyl-[protein] + NH4(+). It catalyses the reaction L-glutaminyl-[protein] + dopamine = 5-dopaminyl-L-glutamyl-[protein] + NH4(+). The catalysed reaction is L-glutaminyl-[protein] + histamine = 5-histaminyl-L-glutamyl-[protein] + NH4(+). It carries out the reaction L-glutaminyl-[protein] + (R)-noradrenaline = 5-(R)-noradrenalinyl-L-glutamyl-[protein] + NH4(+). The enzyme catalyses L-glutaminyl-[protein] + H2O = L-glutamyl-[protein] + NH4(+). Its activity is regulated as follows. Acyltransferase activity is regulated by the binding of GTP and Ca(2+): inactivated by GTP, which stabilizes its closed structure, thereby obstructing the accessibility of substrates to the active sites. In contrast, Ca(2+) acts as a cofactor by inducing conformational change to the active open form. In absence of Ca(2+), Mg(2+) may bind Ca(2+)-binding sites, promoting GTP-binding and subsequent inhibition of the acyltransferase activity. Functionally, calcium-dependent acyltransferase that catalyzes the formation of covalent bonds between peptide-bound glutamine and various primary amines, such as gamma-amino group of peptide-bound lysine, or mono- and polyamines, thereby producing cross-linked or aminated proteins, respectively. Involved in many biological processes, such as bone development, angiogenesis, wound healing, cellular differentiation, chromatin modification and apoptosis. Acts as a protein-glutamine gamma-glutamyltransferase by mediating the cross-linking of proteins: under physiological conditions, the protein cross-linking activity is inhibited by GTP; inhibition is relieved by Ca(2+) in response to various stresses. When secreted, catalyzes cross-linking of proteins of the extracellular matrix, resulting in the formation of scaffolds. Plays a key role during apoptosis, both by (1) promoting the cross-linking of cytoskeletal proteins resulting in condensation of the cytoplasm, and by (2) mediating cross-linking proteins of the extracellular matrix, resulting in the irreversible formation of scaffolds that stabilize the integrity of the dying cells before their clearance by phagocytosis, thereby preventing the leakage of harmful intracellular components. In addition to protein cross-linking, can use different monoamine substrates to catalyze a vast array of protein post-translational modifications: mediates aminylation of serotonin, dopamine, noradrenaline or histamine into glutamine residues of target proteins to generate protein serotonylation, dopaminylation, noradrenalinylation or histaminylation, respectively. Mediates protein serotonylation of small GTPases during activation and aggregation of platelets, leading to constitutive activation of these GTPases. Plays a key role in chromatin organization by mediating serotonylation and dopaminylation of histone H3. Catalyzes serotonylation of 'Gln-5' of histone H3 (H3Q5ser) during serotonergic neuron differentiation, thereby facilitating transcription. Acts as a mediator of neurotransmission-independent role of nuclear dopamine in ventral tegmental area (VTA) neurons: catalyzes dopaminylation of 'Gln-5' of histone H3 (H3Q5dop), thereby regulating relapse-related transcriptional plasticity in the reward system. Also acts as a protein deamidase by mediating the side chain deamidation of specific glutamine residues of proteins to glutamate. May also act as an isopeptidase cleaving the previously formed cross-links. Also able to participate in signaling pathways independently of its acyltransferase activity: acts as a signal transducer in alpha-1 adrenergic receptor-mediated stimulation of phospholipase C-delta (PLCD) activity and is required for coupling alpha-1 adrenergic agonists to the stimulation of phosphoinositide lipid metabolism. This Gallus gallus (Chicken) protein is Protein-glutamine gamma-glutamyltransferase 2.